We begin with the raw amino-acid sequence, 769 residues long: MTEKDWIIQYDKKEVGKRSYGQESLMSLGNGYLGLRGAPLWSTCSDNHYPGLYVAGVFNRTSTEVAGHDVINEDMVNWPNPQLIKVYIDGELVDFEASVEKQATIDFKNALQIERYQVKLAKGNLTLVTTKFVDPINFHDFGFVGEIIADFSCKLRIETFTDGSVLNQNVERYRAFDSKEFEVTKISKGLLVAKTRTSEIELAIASKSFLNGLAFPKIDSENDEILAEAIEIDLQKNQEVQFDKTIVIASSYESKNPVEFVLTELSATSVSKIQENNTNYWEKVWSDADIVIESDHEDLQRMVRMNIFHIRQAAQHGANQFLDASVGSRGLTGEGYRGHIFWDEIFVLPYYAANEPETARDLLLYRINRLTAAQENAKVDGEKGAMFPWQSGLIGDEQSQFVHLNTVNNEWEPDNSRRQRHVSLAIVYNLWIYSQLTEDESILTDGGLDLIIETTKFWLNKAELGDDGRYHIDGVMGPDEYHEAYPGQEGGICDNAYTNLMLTWQLNWLTELSEKGFEIPKELLEKAQKVRKKLYLDIDENGVIAQYAKYFELKEVDFAAYEAKYGDIHRIDRLMKAEGISPDEYQVAKQADTLMLIYNLGQEHVTKLVKQLAYELPENWLKVNRDYYLARTVHGSTTSRPVFAGIDVKLGDFDEALDFLITAIGSDYYDIQGGTTAEGVHIGVMGETLEVIQNEFAGLSLREGQFAIAPYLPKSWTKLKFNQIFRGTKVEILIENGQLLLTASADLLTKVYDDEVQLKAGVQTKFDLK.

Substrate is bound at residue 342 to 343 (WD). The active-site Proton donor is the Glu-480. 589-590 (KQ) is a binding site for substrate.

This sequence belongs to the glycosyl hydrolase 65 family. As to quaternary structure, monomer.

It catalyses the reaction alpha,alpha-trehalose 6-phosphate + phosphate = beta-D-glucose 1-phosphate + D-glucose 6-phosphate. In terms of biological role, catalyzes the conversion of trehalose 6-phosphate into glucose 1-phosphate and glucose 6-phosphate. The polypeptide is Trehalose 6-phosphate phosphorylase (trePP) (Lactococcus lactis subsp. lactis (strain IL1403) (Streptococcus lactis)).